Reading from the N-terminus, the 262-residue chain is Acyl-[acyl-carrier-protein]--UDP-N-acetylglucosamine O-acyltransferase (262 aa).

It belongs to the transferase hexapeptide repeat family. LpxA subfamily. As to quaternary structure, homotrimer.

It localises to the cytoplasm. The catalysed reaction is a (3R)-hydroxyacyl-[ACP] + UDP-N-acetyl-alpha-D-glucosamine = a UDP-3-O-[(3R)-3-hydroxyacyl]-N-acetyl-alpha-D-glucosamine + holo-[ACP]. The protein operates within glycolipid biosynthesis; lipid IV(A) biosynthesis; lipid IV(A) from (3R)-3-hydroxytetradecanoyl-[acyl-carrier-protein] and UDP-N-acetyl-alpha-D-glucosamine: step 1/6. In terms of biological role, involved in the biosynthesis of lipid A, a phosphorylated glycolipid that anchors the lipopolysaccharide to the outer membrane of the cell. This chain is Acyl-[acyl-carrier-protein]--UDP-N-acetylglucosamine O-acyltransferase, found in Burkholderia mallei (strain NCTC 10247).